A 396-amino-acid chain; its full sequence is L-lactate dehydrogenase (396 aa).

Residues 1–380 (MIISAASDYR…TQDSLVQGLG (380 aa)) enclose the FMN hydroxy acid dehydrogenase domain. Tyrosine 24 contributes to the substrate binding site. Residues serine 106 and glutamine 127 each contribute to the FMN site. Tyrosine 129 contacts substrate. Threonine 155 contacts FMN. A substrate-binding site is contributed by arginine 164. Residue lysine 251 coordinates FMN. The Proton acceptor role is filled by histidine 275. A substrate-binding site is contributed by arginine 278. 306-330 (DSGIRNGLDVVRMIALGADTVLLGR) is a binding site for FMN.

It belongs to the FMN-dependent alpha-hydroxy acid dehydrogenase family. FMN is required as a cofactor.

Its subcellular location is the cell inner membrane. It catalyses the reaction (S)-lactate + A = pyruvate + AH2. In terms of biological role, catalyzes the conversion of L-lactate to pyruvate. Is coupled to the respiratory chain. In Shigella boydii serotype 18 (strain CDC 3083-94 / BS512), this protein is L-lactate dehydrogenase.